The primary structure comprises 390 residues: Chorismate synthase (390 aa).

Residues arginine 40 and arginine 46 each coordinate NADP(+). Residues 128 to 130 (RAS), 251 to 252 (QA), glycine 296, 311 to 315 (KPIPT), and arginine 339 contribute to the FMN site.

It belongs to the chorismate synthase family. As to quaternary structure, homotetramer. FMNH2 is required as a cofactor.

It catalyses the reaction 5-O-(1-carboxyvinyl)-3-phosphoshikimate = chorismate + phosphate. The protein operates within metabolic intermediate biosynthesis; chorismate biosynthesis; chorismate from D-erythrose 4-phosphate and phosphoenolpyruvate: step 7/7. Its function is as follows. Catalyzes the anti-1,4-elimination of the C-3 phosphate and the C-6 proR hydrogen from 5-enolpyruvylshikimate-3-phosphate (EPSP) to yield chorismate, which is the branch point compound that serves as the starting substrate for the three terminal pathways of aromatic amino acid biosynthesis. This reaction introduces a second double bond into the aromatic ring system. The protein is Chorismate synthase of Sulfurihydrogenibium sp. (strain YO3AOP1).